The sequence spans 504 residues: Aspartyl/glutamyl-tRNA(Asn/Gln) amidotransferase subunit B (504 aa).

The protein belongs to the GatB/GatE family. GatB subfamily. Heterotrimer of A, B and C subunits.

The catalysed reaction is L-glutamyl-tRNA(Gln) + L-glutamine + ATP + H2O = L-glutaminyl-tRNA(Gln) + L-glutamate + ADP + phosphate + H(+). The enzyme catalyses L-aspartyl-tRNA(Asn) + L-glutamine + ATP + H2O = L-asparaginyl-tRNA(Asn) + L-glutamate + ADP + phosphate + 2 H(+). Its function is as follows. Allows the formation of correctly charged Asn-tRNA(Asn) or Gln-tRNA(Gln) through the transamidation of misacylated Asp-tRNA(Asn) or Glu-tRNA(Gln) in organisms which lack either or both of asparaginyl-tRNA or glutaminyl-tRNA synthetases. The reaction takes place in the presence of glutamine and ATP through an activated phospho-Asp-tRNA(Asn) or phospho-Glu-tRNA(Gln). This is Aspartyl/glutamyl-tRNA(Asn/Gln) amidotransferase subunit B from Tropheryma whipplei (strain Twist) (Whipple's bacillus).